The primary structure comprises 87 residues: MARSLKKGPFVDHHLQKKVDVQNKEGTKKPIKTWSRRSMITPDMVGHTFEVHNGRKHLTVFVTDNMVGHRLGEFSPTRTFKGHPIKK.

Positions 1 to 29 (MARSLKKGPFVDHHLQKKVDVQNKEGTKK) are disordered. Residues 9–28 (PFVDHHLQKKVDVQNKEGTK) are compositionally biased toward basic and acidic residues.

The protein belongs to the universal ribosomal protein uS19 family.

Its function is as follows. Protein S19 forms a complex with S13 that binds strongly to the 16S ribosomal RNA. This is Small ribosomal subunit protein uS19 from Protochlamydia amoebophila (strain UWE25).